The sequence spans 403 residues: Dihydroorotase (403 aa).

Positions 48 and 50 each coordinate Zn(2+). Substrate-binding positions include 50-52 and Asn82; that span reads HLR. Zn(2+) contacts are provided by Glu140, His172, His211, and Asp277. Residue Asp277 is part of the active site. Residue His281 coordinates substrate.

It belongs to the metallo-dependent hydrolases superfamily. DHOase family. Class I DHOase subfamily. Zn(2+) serves as cofactor.

It carries out the reaction (S)-dihydroorotate + H2O = N-carbamoyl-L-aspartate + H(+). The protein operates within pyrimidine metabolism; UMP biosynthesis via de novo pathway; (S)-dihydroorotate from bicarbonate: step 3/3. Functionally, catalyzes the reversible cyclization of carbamoyl aspartate to dihydroorotate. The chain is Dihydroorotase from Archaeoglobus fulgidus (strain ATCC 49558 / DSM 4304 / JCM 9628 / NBRC 100126 / VC-16).